Consider the following 326-residue polypeptide: Zinc transporter 11 (326 aa).

A signal peptide spans 1–20 (MSRSLVFFFLFLVLVVPCLS). Residues 21 to 49 (HGTGGDHDDDEASHVKSSDLKSKSLISVK) lie on the Extracellular side of the membrane. Residues 50–70 (IACLVIIFVLTFISGVSPYFL) form a helical membrane-spanning segment. At 71-75 (KWSQG) the chain is on the cytoplasmic side. A helical membrane pass occupies residues 76 to 96 (FLVLGTQFAGGVFLATALMHF). Over 97 to 121 (LSDADETFRGLLTAEGESEPSPAYP) the chain is Extracellular. A helical transmembrane segment spans residues 122 to 142 (FAYMLACAGFMLTMLADSVIA). The Cytoplasmic segment spans residues 143 to 174 (HIYSKTQNDLELQGEDKSNQRSATTETSIGDS). The helical transmembrane segment at 175–195 (ILLIVALCFHSVFEGIAIGIS) threads the bilayer. At 196-203 (ETKSDAWR) the chain is on the extracellular side. A helical transmembrane segment spans residues 204-224 (ALWTITLHKIFAAIAMGIALL). At 225–235 (RMIPDRPLFSS) the chain is on the cytoplasmic side. Residues 236–256 (ITYSFAFAISSPIGVAIGIVI) traverse the membrane as a helical segment. Residues 257–262 (DATTQG) lie on the Extracellular side of the membrane. A helical transmembrane segment spans residues 263 to 283 (SIADWIFALSMSLACGVFVYV). The Cytoplasmic segment spans residues 284–305 (SVNHLLAKGYRPNKKVHVDEPR). A helical transmembrane segment spans residues 306 to 326 (YKFLAVLFGVVVIAIVMIWDT).

It belongs to the ZIP transporter (TC 2.A.5) family.

It is found in the cell membrane. Functionally, probably mediates zinc uptake from the rhizosphere. The sequence is that of Zinc transporter 11 (ZIP11) from Arabidopsis thaliana (Mouse-ear cress).